The chain runs to 289 residues: Formamidopyrimidine-DNA glycosylase (289 aa).

Catalysis depends on proline 2, which acts as the Schiff-base intermediate with DNA. Glutamate 3 acts as the Proton donor in catalysis. Lysine 60 (proton donor; for beta-elimination activity) is an active-site residue. DNA is bound by residues histidine 94, arginine 126, and arginine 167. The FPG-type zinc finger occupies 252-287; the sequence is QVYGKPAGTPCPRCGTGLARIRIAGRSSVFCPRCQP. Arginine 277 functions as the Proton donor; for delta-elimination activity in the catalytic mechanism.

This sequence belongs to the FPG family. As to quaternary structure, monomer. Zn(2+) serves as cofactor.

The catalysed reaction is Hydrolysis of DNA containing ring-opened 7-methylguanine residues, releasing 2,6-diamino-4-hydroxy-5-(N-methyl)formamidopyrimidine.. It catalyses the reaction 2'-deoxyribonucleotide-(2'-deoxyribose 5'-phosphate)-2'-deoxyribonucleotide-DNA = a 3'-end 2'-deoxyribonucleotide-(2,3-dehydro-2,3-deoxyribose 5'-phosphate)-DNA + a 5'-end 5'-phospho-2'-deoxyribonucleoside-DNA + H(+). In terms of biological role, involved in base excision repair of DNA damaged by oxidation or by mutagenic agents. Acts as a DNA glycosylase that recognizes and removes damaged bases. Has a preference for oxidized purines, such as 7,8-dihydro-8-oxoguanine (8-oxoG). Has AP (apurinic/apyrimidinic) lyase activity and introduces nicks in the DNA strand. Cleaves the DNA backbone by beta-delta elimination to generate a single-strand break at the site of the removed base with both 3'- and 5'-phosphates. The chain is Formamidopyrimidine-DNA glycosylase from Thermomicrobium roseum (strain ATCC 27502 / DSM 5159 / P-2).